The chain runs to 326 residues: tRNA-modifying protein YgfZ (326 aa).

The folate site is built by Trp-27 and Trp-189.

It belongs to the tRNA-modifying YgfZ family.

It is found in the cytoplasm. Folate-binding protein involved in regulating the level of ATP-DnaA and in the modification of some tRNAs. It is probably a key factor in regulatory networks that act via tRNA modification, such as initiation of chromosomal replication. The sequence is that of tRNA-modifying protein YgfZ from Escherichia coli O157:H7 (strain EC4115 / EHEC).